We begin with the raw amino-acid sequence, 1030 residues long: Germ cell nuclear acidic protein (1030 aa).

Disordered stretches follow at residues 1–59 (MADH…TEDT), 196–245 (EWNG…TQLA), 266–361 (KRLA…VSSI), 375–433 (TMES…EQFL), 457–594 (LKRS…DLTY), and 699–764 (KLGI…PVAS). Residues 20–33 (APKDHPEKRNDQKT) are compositionally biased toward basic and acidic residues. Polar residues-rich tracts occupy residues 298 to 316 (EPNTLCSDSSETHNSTIHN) and 329 to 349 (ETSSEGELTPQKASSGSSTSG). Polar residues predominate over residues 505-516 (LRTNQTPLNSTR). Composition is skewed to basic and acidic residues over residues 541 to 553 (NHIDEDRWRKLID) and 578 to 594 (DSDKDKENKQKRGDLTY). Over residues 720 to 748 (TPKTAPPKGTAPPKTSAPPKVSTPPKSTK) the composition is skewed to low complexity.

This sequence belongs to the serine-aspartate repeat-containing protein (SDr) family.

The protein resides in the cytoplasm. The protein localises to the chromosome. May play a role in DNA-protein cross-links (DPCs) clearance, ensuring the genomic stability by protecting germ cells and early embryos from various sources of damage. Limits replication stress and DNA double-strand breaks. This Drosophila melanogaster (Fruit fly) protein is Germ cell nuclear acidic protein.